The sequence spans 238 residues: Pyridoxine 5'-phosphate synthase (238 aa).

The 3-amino-2-oxopropyl phosphate site is built by Asn7 and Arg18. His43 acts as the Proton acceptor in catalysis. The 1-deoxy-D-xylulose 5-phosphate site is built by Arg45 and His50. Glu70 functions as the Proton acceptor in the catalytic mechanism. Thr100 contributes to the 1-deoxy-D-xylulose 5-phosphate binding site. His190 (proton donor) is an active-site residue. Residues Asp191 and 213-214 (GH) each bind 3-amino-2-oxopropyl phosphate.

It belongs to the PNP synthase family. In terms of assembly, homooctamer; tetramer of dimers.

It is found in the cytoplasm. It carries out the reaction 3-amino-2-oxopropyl phosphate + 1-deoxy-D-xylulose 5-phosphate = pyridoxine 5'-phosphate + phosphate + 2 H2O + H(+). Its pathway is cofactor biosynthesis; pyridoxine 5'-phosphate biosynthesis; pyridoxine 5'-phosphate from D-erythrose 4-phosphate: step 5/5. Its function is as follows. Catalyzes the complicated ring closure reaction between the two acyclic compounds 1-deoxy-D-xylulose-5-phosphate (DXP) and 3-amino-2-oxopropyl phosphate (1-amino-acetone-3-phosphate or AAP) to form pyridoxine 5'-phosphate (PNP) and inorganic phosphate. The polypeptide is Pyridoxine 5'-phosphate synthase (Phocaeicola vulgatus (strain ATCC 8482 / DSM 1447 / JCM 5826 / CCUG 4940 / NBRC 14291 / NCTC 11154) (Bacteroides vulgatus)).